An 884-amino-acid polypeptide reads, in one-letter code: Translation initiation factor IF-2 (884 aa).

The disordered stretch occupies residues 93–288; that stretch reads VNTPEAEQAK…KGKRKPSTLQ (196 aa). The segment covering 99–209 has biased composition (basic and acidic residues); sequence EQAKAEEQAQ…KMAAENEGKW (111 aa). The span at 216-229 shows a compositional bias: polar residues; sequence QTESADYHVTTSQH. Basic and acidic residues predominate over residues 231–246; the sequence is RAAEDENDAKVEGDRR. Basic residues predominate over residues 247–261; sequence SRTRGGKATKQKKGN. Basic and acidic residues predominate over residues 262-275; sequence KLSESKADREEARA. One can recognise a tr-type G domain in the interval 383-552; the sequence is HRAPVVTIMG…LLQAEVLELK (170 aa). Positions 392–399 are G1; that stretch reads GHVDHGKT. Residue 392–399 participates in GTP binding; sequence GHVDHGKT. The G2 stretch occupies residues 417–421; sequence GITQH. A G3 region spans residues 438–441; sequence DTPG. GTP is bound by residues 438–442 and 492–495; these read DTPGH and NKID. Residues 492–495 form a G4 region; sequence NKID. Positions 528 to 530 are G5; it reads SAK.

Belongs to the TRAFAC class translation factor GTPase superfamily. Classic translation factor GTPase family. IF-2 subfamily.

The protein localises to the cytoplasm. Functionally, one of the essential components for the initiation of protein synthesis. Protects formylmethionyl-tRNA from spontaneous hydrolysis and promotes its binding to the 30S ribosomal subunits. Also involved in the hydrolysis of GTP during the formation of the 70S ribosomal complex. The sequence is that of Translation initiation factor IF-2 from Yersinia pestis bv. Antiqua (strain Antiqua).